A 427-amino-acid chain; its full sequence is Peptidase B (427 aa).

Mn(2+) contacts are provided by K195 and D200. K207 is an active-site residue. D218, D277, and E279 together coordinate Mn(2+). R281 is a catalytic residue.

The protein belongs to the peptidase M17 family. In terms of assembly, homohexamer. Mn(2+) is required as a cofactor.

The protein localises to the cytoplasm. It catalyses the reaction Release of an N-terminal amino acid, Xaa, from a peptide or arylamide. Xaa is preferably Glu or Asp but may be other amino acids, including Leu, Met, His, Cys and Gln.. Probably plays an important role in intracellular peptide degradation. This is Peptidase B from Shigella flexneri.